A 255-amino-acid chain; its full sequence is Developmental and secondary metabolism regulator MVE1 (255 aa).

In terms of domain architecture, Velvet spans 31-226 (GRKLTYRMSV…AEQGCRVRIR (196 aa)). Positions 45–50 (VRARAC) match the Nuclear localization signal motif. Disordered stretches follow at residues 163–184 (CKSP…DAHV) and 229–255 (VRMR…QARA). Acidic residues predominate over residues 245 to 255 (NYEDETAQARA).

This sequence belongs to the velvet family. VeA subfamily. In terms of assembly, component of the heterotrimeric velvet complex composed of LAE1, MVE1 and VEL2; MVE1 acting as a bridging protein between LAE1 and VEL2.

It is found in the nucleus. Its subcellular location is the cytoplasm. Its function is as follows. Component of the velvet transcription factor complex that controls sexual/asexual developmental ratio in response to light, promoting sexual development in the darkness while stimulating asexual sporulation under illumination. The velvet complex hat acts as a global regulator for secondary metabolite gene expression. Controls the expression of the melanin gene cluster. Mediates the light-stimulated formation of aerial mycelia. This chain is Developmental and secondary metabolism regulator MVE1, found in Zymoseptoria tritici (strain CBS 115943 / IPO323) (Speckled leaf blotch fungus).